The following is a 358-amino-acid chain: C-C chemokine receptor type 3 (358 aa).

Residues 1 to 43 (MATYPEEAELETEFPGTTFYDYEFAQPCFKVSITDLGAQFLPS) lie on the Extracellular side of the membrane. Residues 44-64 (LFSLVFIVGLLGNITVIVVLT) form a helical membrane-spanning segment. The Cytoplasmic segment spans residues 65-74 (KYQKLKIMTN). A helical membrane pass occupies residues 75–95 (IYLLNLAISDLLFLFTLPFWT). The Extracellular segment spans residues 96 to 112 (YYVHWNKWVFGHFMCKI). Residues 113–133 (ISGLYYVGLFSEIFFIILLTI) traverse the membrane as a helical segment. Residues 134 to 154 (DRYLAIVHAVFALRTRTVTFG) are Cytoplasmic-facing. A helical transmembrane segment spans residues 155 to 175 (IITSVITWVLAVLAALPEFMF). Topologically, residues 176–206 (YGTQGHFEVLFCGPSYPEKKEHHWKRFQALR) are extracellular. The helical transmembrane segment at 207 to 227 (MNIFGLALPLLIMIICYTGII) threads the bilayer. The Cytoplasmic portion of the chain corresponds to 228 to 243 (KTLLRCPSKKKYKAIR). A helical membrane pass occupies residues 244-264 (LIFVIMVVFFVFWTPYNLLLL). The Extracellular segment spans residues 265–287 (FSAFDLSFLDDCERSKQLDMAKH). The helical transmembrane segment at 288 to 308 (VTEVIAHTHCCINPIIYAFVG) threads the bilayer. Residues 309–358 (ERFQKYLRHFLHRNVTMHLSKYIPFFTSEKLERSSSISPSSGDPELSVVF) lie on the Cytoplasmic side of the membrane.

Belongs to the G-protein coupled receptor 1 family.

The protein localises to the cell membrane. Receptor for C-C type chemokine. Binds and responds to a variety of chemokines, including CCL11, CCL26, CCL7, CCL13, RANTES(CCL5) and CCL15. Subsequently transduces a signal by increasing the intracellular calcium ions level. In addition acts as a possible functional receptor for NARS1. The chain is C-C chemokine receptor type 3 (CCR3) from Cavia porcellus (Guinea pig).